Reading from the N-terminus, the 488-residue chain is Fumarate hydratase (488 aa).

(S)-malate contacts are provided by S105, S147, N148, T194, and H195. H195 acts as the Proton donor/acceptor in catalysis. S340 is a catalytic residue. Positions 341, 346, and 348 each coordinate (S)-malate.

Belongs to the class-II fumarase/aspartase family. Fumarase subfamily. As to quaternary structure, homotetramer.

It is found in the cytoplasm. It localises to the cytosol. The enzyme catalyses (S)-malate = fumarate + H2O. Its function is as follows. Catalyzes the reversible stereospecific interconversion of fumarate to L-malate. Fumarate metabolism in the cytosol plays a role during urea cycle and arginine metabolism; fumarate being a by-product of the urea cycle and amino-acid catabolism. The chain is Fumarate hydratase from Schistosoma mansoni (Blood fluke).